Consider the following 113-residue polypeptide: Large ribosomal subunit protein uL24 (113 aa).

The protein belongs to the universal ribosomal protein uL24 family. In terms of assembly, part of the 50S ribosomal subunit.

Functionally, one of two assembly initiator proteins, it binds directly to the 5'-end of the 23S rRNA, where it nucleates assembly of the 50S subunit. One of the proteins that surrounds the polypeptide exit tunnel on the outside of the subunit. This chain is Large ribosomal subunit protein uL24, found in Chlamydia felis (strain Fe/C-56) (Chlamydophila felis).